Here is a 367-residue protein sequence, read N- to C-terminus: Phosphoribosylaminoimidazole-succinocarboxamide synthase (367 aa).

The protein belongs to the SAICAR synthetase family.

It catalyses the reaction 5-amino-1-(5-phospho-D-ribosyl)imidazole-4-carboxylate + L-aspartate + ATP = (2S)-2-[5-amino-1-(5-phospho-beta-D-ribosyl)imidazole-4-carboxamido]succinate + ADP + phosphate + 2 H(+). The protein operates within purine metabolism; IMP biosynthesis via de novo pathway; 5-amino-1-(5-phospho-D-ribosyl)imidazole-4-carboxamide from 5-amino-1-(5-phospho-D-ribosyl)imidazole-4-carboxylate: step 1/2. This is Phosphoribosylaminoimidazole-succinocarboxamide synthase from Vibrio vulnificus (strain CMCP6).